The sequence spans 492 residues: Probable glycine dehydrogenase (decarboxylating) subunit 2 (492 aa).

N6-(pyridoxal phosphate)lysine is present on K274.

It belongs to the GcvP family. C-terminal subunit subfamily. The glycine cleavage system is composed of four proteins: P, T, L and H. In this organism, the P 'protein' is a heterodimer of two subunits. Pyridoxal 5'-phosphate serves as cofactor.

The catalysed reaction is N(6)-[(R)-lipoyl]-L-lysyl-[glycine-cleavage complex H protein] + glycine + H(+) = N(6)-[(R)-S(8)-aminomethyldihydrolipoyl]-L-lysyl-[glycine-cleavage complex H protein] + CO2. In terms of biological role, the glycine cleavage system catalyzes the degradation of glycine. The P protein binds the alpha-amino group of glycine through its pyridoxal phosphate cofactor; CO(2) is released and the remaining methylamine moiety is then transferred to the lipoamide cofactor of the H protein. The sequence is that of Probable glycine dehydrogenase (decarboxylating) subunit 2 from Staphylococcus saprophyticus subsp. saprophyticus (strain ATCC 15305 / DSM 20229 / NCIMB 8711 / NCTC 7292 / S-41).